Consider the following 87-residue polypeptide: Defensin-like protein 218 (87 aa).

Positions 1 to 19 (MKTIVCFLTILILVSSCES) are cleaved as a signal peptide. 3 cysteine pairs are disulfide-bonded: Cys-51/Cys-70, Cys-54/Cys-75, and Cys-58/Cys-77.

Belongs to the DEFL family.

It is found in the secreted. The protein is Defensin-like protein 218 of Arabidopsis thaliana (Mouse-ear cress).